We begin with the raw amino-acid sequence, 486 residues long: Putative protease Do-like 13 (486 aa).

Residues 44–229 (KINTFSSKPN…IPAPVVKHFI (186 aa)) are serine protease. Residues His-83, Asp-114, and Ser-192 each act as charge relay system in the active site. Positions 241–334 (FCSLNLSYQH…TILLKILREG (94 aa)) constitute a PDZ domain.

This sequence belongs to the peptidase S1C family.

Putative serine protease. This is Putative protease Do-like 13 (DEGP13) from Arabidopsis thaliana (Mouse-ear cress).